Reading from the N-terminus, the 602-residue chain is Elongation factor 4 (602 aa).

Residues 7-189 (KYIRNFSIVA…AIVNKVPAPD (183 aa)) form the tr-type G domain. GTP contacts are provided by residues 19-24 (DHGKST) and 136-139 (NKID).

This sequence belongs to the TRAFAC class translation factor GTPase superfamily. Classic translation factor GTPase family. LepA subfamily.

Its subcellular location is the cell membrane. The catalysed reaction is GTP + H2O = GDP + phosphate + H(+). Its function is as follows. Required for accurate and efficient protein synthesis under certain stress conditions. May act as a fidelity factor of the translation reaction, by catalyzing a one-codon backward translocation of tRNAs on improperly translocated ribosomes. Back-translocation proceeds from a post-translocation (POST) complex to a pre-translocation (PRE) complex, thus giving elongation factor G a second chance to translocate the tRNAs correctly. Binds to ribosomes in a GTP-dependent manner. The polypeptide is Elongation factor 4 (Clostridium botulinum (strain ATCC 19397 / Type A)).